Consider the following 237-residue polypeptide: uncharacterized protein (237 aa).

A signal peptide (tat-type signal) is located at residues 1–25 (MRHIFQRLLPRRLWLAGLPCLALLG). Residues 201 to 237 (IERQLSTRKPAGNFSPDTPHESEKPAPSTHEVTPDEP) form a disordered region.

Exported by the Tat system. The position of the signal peptide cleavage has not been experimentally proven. Can also be exported by the Sec system.

This is an uncharacterized protein from Escherichia coli (strain K12).